A 71-amino-acid polypeptide reads, in one-letter code: UPF0435 protein RBAM_008100 (71 aa).

The protein belongs to the UPF0435 family.

The polypeptide is UPF0435 protein RBAM_008100 (Bacillus velezensis (strain DSM 23117 / BGSC 10A6 / LMG 26770 / FZB42) (Bacillus amyloliquefaciens subsp. plantarum)).